The sequence spans 611 residues: DNA mismatch repair protein MutL (611 aa).

Belongs to the DNA mismatch repair MutL/HexB family.

This protein is involved in the repair of mismatches in DNA. It is required for dam-dependent methyl-directed DNA mismatch repair. May act as a 'molecular matchmaker', a protein that promotes the formation of a stable complex between two or more DNA-binding proteins in an ATP-dependent manner without itself being part of a final effector complex. The chain is DNA mismatch repair protein MutL from Borreliella afzelii (strain PKo) (Borrelia afzelii).